Reading from the N-terminus, the 49-residue chain is uncharacterized protein (49 aa).

A helical membrane pass occupies residues 17 to 39 (LLVFDTSLYIPPFMLSFIGYSLS).

The protein resides in the membrane. This is an uncharacterized protein from Saccharomyces cerevisiae (strain ATCC 204508 / S288c) (Baker's yeast).